The sequence spans 172 residues: RNA silencing suppressor p19 (172 aa).

Residues 1–20 (MERVIQGNDAREQANGERWD) show a composition bias toward basic and acidic residues. The segment at 1 to 37 (MERVIQGNDAREQANGERWDGGSGGTTSGFKLPDESP) is disordered.

This sequence belongs to the tombusvirus protein p19 family. In terms of assembly, homodimer.

Its function is as follows. Viral suppressor of RNA silencing which binds specifically to silencing RNAs (siRNAs). Acts as a molecular caliper to specifically select siRNAs based on the length of the duplex region of the RNA. The chain is RNA silencing suppressor p19 from Cynara cardunculus var. scolymus (Globe artichoke).